A 74-amino-acid polypeptide reads, in one-letter code: Protein SlyX homolog (74 aa).

Residues 52-74 form a disordered region; that stretch reads LKQMQENQSTDSDPADEPPPPHY.

This sequence belongs to the SlyX family.

This chain is Protein SlyX homolog, found in Idiomarina loihiensis (strain ATCC BAA-735 / DSM 15497 / L2-TR).